The following is a 326-amino-acid chain: ELMO domain-containing protein 1 (326 aa).

The ELMO domain occupies 133-306; the sequence is QHEEMLLKLW…KFRKRIIKQL (174 aa).

In terms of biological role, acts as a GTPase-activating protein (GAP) toward guanine nucleotide exchange factors like ARL2, ARL3, ARF1 and ARF6, but not for GTPases outside the Arf family. The chain is ELMO domain-containing protein 1 (ELMOD1) from Bos taurus (Bovine).